A 399-amino-acid chain; its full sequence is Maltose excess protein 1-like, chloroplastic (399 aa).

Residues 1 to 67 constitute a chloroplast transit peptide; the sequence is MSSSVSSVRL…RRRRYALPPV (67 aa). The next 9 helical transmembrane spans lie at 93–113, 123–143, 154–174, 180–202, 217–237, 238–258, 268–288, 306–326, and 361–381; these read FAGAANVPFLLLQLPQIILNA, ALFAVPWLGMLTGLLGNLSLL, AVIVQTLGVISTYVVIAQLAM, LPQFVATSAVVAAGLLLNFLNYF, ITIGGLAVLPQVMWSTFVPFI, PNSLLPGIISGSLAATAVVMA, INFVGSLSGWTATLLFMWMPV, AFTMLLAMIGNGLMIPRAVFI, and FLATTFGLLLWLGFTLWRDTI.

It is found in the plastid. Its subcellular location is the chloroplast inner membrane. Functionally, probable maltose transporter. Essential for the conversion of starch to sucrose in leaves at night, probably via the export of maltose from the chloroplast. This Oryza sativa subsp. japonica (Rice) protein is Maltose excess protein 1-like, chloroplastic.